The following is a 194-amino-acid chain: DPY30 domain-containing protein 2 (194 aa).

A disordered region spans residues 126–172; it reads EAFEKEPLKQESLPGTSDMIPGMPQQSPSSEPSVSSQVDLNTGTPQE. Residues 149-163 show a composition bias toward low complexity; it reads PQQSPSSEPSVSSQV.

This sequence belongs to the dpy-30 family.

The polypeptide is DPY30 domain-containing protein 2 (DYDC2) (Bos taurus (Bovine)).